Consider the following 311-residue polypeptide: Olfactory receptor 8G1 (311 aa).

Residues 1–25 (MSGENNSSVTEFILAGLSEQPELQL) lie on the Extracellular side of the membrane. Asn-5 and Asn-6 each carry an N-linked (GlcNAc...) asparagine glycan. The helical transmembrane segment at 26 to 46 (PLFLLFLGIYVVTVVGNLGMT) threads the bilayer. The Cytoplasmic portion of the chain corresponds to 47-54 (TLIWLSSH). Residues 55 to 75 (LHTPMYYFLSSLSFIDFCHST) traverse the membrane as a helical segment. The Extracellular segment spans residues 76-99 (VITPKMLVNFVTEKNIISYPECMT). Cysteines 97 and 189 form a disulfide. A helical transmembrane segment spans residues 100–120 (QLYFFLVFAIAECHMLAAMAY). The Cytoplasmic segment spans residues 121–139 (DRYMAICSPLLYSVIISNK). Residues 140–160 (ACFSLILGVYIIGLVCASVHT) traverse the membrane as a helical segment. The Extracellular segment spans residues 161-197 (GCMFRVQFCKFDLINHYFCDLLPLLKLSCSSIYVNKL). A helical membrane pass occupies residues 198-217 (LILCVGAFNILVPSLTILCS). Over 218 to 237 (YIFIIASILHIRSTEGRSKA) the chain is Cytoplasmic. The helical transmembrane segment at 238 to 258 (FSTCSSHMLAVVIFFGSAAFM) threads the bilayer. The Extracellular portion of the chain corresponds to 259–271 (YLQPSSISSMDQG). A helical membrane pass occupies residues 272–292 (KVSSVFYTIIVPMLNPLIYSL). The Cytoplasmic portion of the chain corresponds to 293–311 (RNKDVHVSLKKMLQRRTLL).

Belongs to the G-protein coupled receptor 1 family.

The protein localises to the cell membrane. In terms of biological role, odorant receptor. This chain is Olfactory receptor 8G1 (OR8G1), found in Homo sapiens (Human).